The primary structure comprises 440 residues: MQAYFDQLDRVRYEGSKSSNPLAFHHYNPDELVLGKRMEEHLRFAACYWHTFCWNGADMFGVGAFNRPWQQPGEALALAKRKADVAFEFFHKLHVPFYCFHDVDVSPEGASLKEYINNFAQMVDVLAGKQEESGVKLLWGTANCFTNPRYGAGAATNPDPEVFSWAATQVVTAMEATHKLGGENYVLWGGREGYETLLNTDLRQEREQLGRFMQMVVEHKHKIGFQGTLLIEPKPQEPTKHQYDYDAATVYGFLKQFGLEKEIKLNIEANHATLAGHSFHHEIATAIALGLFGSVDANRGDAQLGWDTDQFPNSVEENALVMYEILKAGGFTTGGLNFDAKVRRQSTDKYDLFYGHIGAMDTMALALKIAARMIEDGELDKRIAQRYSGWNSELGQQILKGQMSLADLAKYAQEHNLSPVHQSGRQEQLENLVNHYLFDK.

Catalysis depends on residues H101 and D104. 7 residues coordinate Mg(2+): E232, E268, H271, D296, D307, D309, and D339.

It belongs to the xylose isomerase family. Homotetramer. It depends on Mg(2+) as a cofactor.

It is found in the cytoplasm. The catalysed reaction is alpha-D-xylose = alpha-D-xylulofuranose. The protein is Xylose isomerase of Escherichia coli O17:K52:H18 (strain UMN026 / ExPEC).